The primary structure comprises 183 residues: Type II secretion system protein H (183 aa).

Residues 1–8 constitute a propeptide, leader sequence; sequence MRRHRQSG. Phe9 carries the N-methylphenylalanine modification. A helical transmembrane segment spans residues 9 to 28; it reads FTLLEVLLVAMLMGLVATAV.

The protein belongs to the GSP H family. In terms of assembly, type II secretion is composed of four main components: the outer membrane complex, the inner membrane complex, the cytoplasmic secretion ATPase and the periplasm-spanning pseudopilus. Interacts with core component ExeG. Post-translationally, cleaved by prepilin peptidase. Methylated by prepilin peptidase at the amino group of the N-terminal phenylalanine once the leader sequence is cleaved by prepilin peptidase.

It localises to the cell inner membrane. Its function is as follows. Component of the type II secretion system required for the energy-dependent secretion of extracellular factors such as proteases and toxins from the periplasm. Part of the pseudopilus tip complex that is critical for the recognition and binding of secretion substrates. The polypeptide is Type II secretion system protein H (exeH) (Aeromonas hydrophila).